Consider the following 251-residue polypeptide: GTP cyclohydrolase FolE2 (251 aa).

The protein belongs to the GTP cyclohydrolase IV family.

It carries out the reaction GTP + H2O = 7,8-dihydroneopterin 3'-triphosphate + formate + H(+). The protein operates within cofactor biosynthesis; 7,8-dihydroneopterin triphosphate biosynthesis; 7,8-dihydroneopterin triphosphate from GTP: step 1/1. Its function is as follows. Converts GTP to 7,8-dihydroneopterin triphosphate. This is GTP cyclohydrolase FolE2 from Desulfotalea psychrophila (strain LSv54 / DSM 12343).